A 305-amino-acid polypeptide reads, in one-letter code: Aurora/IPL1-related protein kinase 2 (305 aa).

A Protein kinase domain is found at 30-280; the sequence is FEIGRPLGKG…LEQVKEHYWI (251 aa). Residues 36–44 and lysine 59 contribute to the ATP site; that span reads LGKGKFGSV. Catalysis depends on aspartate 153, which acts as the Proton acceptor.

Belongs to the protein kinase superfamily. Ser/Thr protein kinase family. Aurora subfamily. Component of the CPC complex which consists of icp-1; csc-1; bir-1 and air-2. Within the complex, interacts with icp-1; csc-1 and bir-1. Interacts with zen-4. Interacts with tlk-1 and bmk-1. Phosphorylated. Increased phosphorylation upon chromatin obstructions at anaphase.

The protein resides in the cytoplasm. It localises to the cytoskeleton. Its subcellular location is the chromosome. It is found in the midbody. The protein localises to the spindle. The catalysed reaction is L-seryl-[protein] + ATP = O-phospho-L-seryl-[protein] + ADP + H(+). It catalyses the reaction L-threonyl-[protein] + ATP = O-phospho-L-threonyl-[protein] + ADP + H(+). Serine/threonine-protein kinase component of the chromosomal passenger complex (CPC), a complex that acts as a key regulator of chromosome segregation and cytokinesis. The CPC complex has essential functions at the centromere in ensuring correct chromosome alignment and segregation. Required for histone H3 phosphorylation during segregation of homologous chromosomes in meiosis and mitosis. Required for histone H3 'Ser-10' phosphorylation. Phosphorylates tlk-1 at 'Ser-634', which enhances its activity. Phosphorylates zen-4 at 'Ser-680'. Required for the recruitment of bub-1 to the ring-shaped domain between chromosomes during meiotic anaphase I. Also required for the localization of the condensin I complex subunit smc-4 to mitotic chromosomes. Acts at the spindle midzone and the midbody to prevent cleavage furrow regression upon chromatin obstructions during cytokinesis. The protein is Aurora/IPL1-related protein kinase 2 of Caenorhabditis elegans.